Reading from the N-terminus, the 403-residue chain is Ribosomal RNA large subunit methyltransferase I (403 aa).

The region spanning 9–88 (YPRLVLSKGR…ESIDIAFFTR (80 aa)) is the PUA domain.

This sequence belongs to the methyltransferase superfamily. RlmI family.

The protein localises to the cytoplasm. The catalysed reaction is cytidine(1962) in 23S rRNA + S-adenosyl-L-methionine = 5-methylcytidine(1962) in 23S rRNA + S-adenosyl-L-homocysteine + H(+). In terms of biological role, specifically methylates the cytosine at position 1962 (m5C1962) of 23S rRNA. The polypeptide is Ribosomal RNA large subunit methyltransferase I (Salmonella choleraesuis (strain SC-B67)).